A 440-amino-acid polypeptide reads, in one-letter code: Xylose isomerase (440 aa).

Residues His-100 and Asp-103 contribute to the active site. The Mg(2+) site is built by Glu-231, Glu-267, His-270, Asp-295, Asp-306, Asp-308, and Asp-338.

This sequence belongs to the xylose isomerase family. In terms of assembly, homotetramer. Mg(2+) is required as a cofactor.

The protein localises to the cytoplasm. The enzyme catalyses alpha-D-xylose = alpha-D-xylulofuranose. This chain is Xylose isomerase, found in Burkholderia multivorans (strain ATCC 17616 / 249).